Here is a 410-residue protein sequence, read N- to C-terminus: Transcription factor PHYTOCHROME INTERACTING FACTOR-LIKE 13 (410 aa).

Residues 82-92 (AAAAAGPSSHH) show a composition bias toward low complexity. 2 disordered regions span residues 82 to 110 (AAAA…MRSG) and 137 to 225 (CRDA…AEVH). The segment covering 93-104 (APPPDLPPPAAR) has biased composition (pro residues). Positions 187–197 (GREDSDSRSED) are enriched in basic and acidic residues. Residues 209–219 (SSRRYGSKRRT) are compositionally biased toward basic residues. Residues 220–233 (RAAEVHNLSERRRR) form a basic motif region. Positions 220 to 269 (RAAEVHNLSERRRRDRINEKMRALQELIPHCNKTDKASILDEAIEYLKSL) constitute a bHLH domain. Positions 234–269 (DRINEKMRALQELIPHCNKTDKASILDEAIEYLKSL) are helix-loop-helix motif. The interval 357-410 (PFLHPDGWQTVPPQVSGPYASGPQVAQQNQIPKASASTVLPNSGAEQPPTSDGI) is disordered. Residues 380-410 (QVAQQNQIPKASASTVLPNSGAEQPPTSDGI) show a composition bias toward polar residues.

The protein belongs to the bHLH protein family. Interacts with PRR1. Interacts with LF. In terms of tissue distribution, highly expressed in the node portions of the stem. Expressed in the leaves and the basal part of shoots.

The protein localises to the nucleus. Its function is as follows. Transcription factor that may act as negative regulator of phyB-dependent light signal transduction. Transcription activator that acts as a positive regulator of internode elongation. May function via regulation of cell wall-related genes. May play a role in a drought-associated growth-restriction mechanism in response to drought stress. The chain is Transcription factor PHYTOCHROME INTERACTING FACTOR-LIKE 13 from Oryza sativa subsp. japonica (Rice).